Reading from the N-terminus, the 671-residue chain is ATP-dependent zinc metalloprotease FtsH (671 aa).

Topologically, residues 1-22 (MANPNNNNDNKQNNNNNFFNDN) are cytoplasmic. Residues 23–43 (PLLAFAIFSIVIILIFKSFVG) form a helical membrane-spanning segment. Topologically, residues 44 to 130 (EGESLGTMMN…ISYEGVVGNG (87 aa)) are periplasmic. A helical transmembrane segment spans residues 131–151 (FFSELISMMLPILIFFAIWIF). The Cytoplasmic portion of the chain corresponds to 152 to 671 (LAKKMSKGMG…SEESDNNKEA (520 aa)). Position 224–231 (224–231 (GPPGTGKT)) interacts with ATP. Residue His-447 participates in Zn(2+) binding. Residue Glu-448 is part of the active site. Zn(2+) is bound by residues His-451 and Asp-525. The disordered stretch occupies residues 630 to 671 (EKGMPSRLAHKDKVAKNKAEADKKEEALKKEISEESDNNKEA).

This sequence in the central section; belongs to the AAA ATPase family. The protein in the C-terminal section; belongs to the peptidase M41 family. As to quaternary structure, homohexamer. Requires Zn(2+) as cofactor.

It is found in the cell inner membrane. Its function is as follows. Acts as a processive, ATP-dependent zinc metallopeptidase for both cytoplasmic and membrane proteins. Plays a role in the quality control of integral membrane proteins. This Sulfurovum sp. (strain NBC37-1) protein is ATP-dependent zinc metalloprotease FtsH.